Consider the following 369-residue polypeptide: Mannose-1-phosphate guanylyltransferase catalytic subunit beta (369 aa).

A substrate-binding domain region spans residues Arg12–Pro231. Asp120 contacts GDP-alpha-D-mannose. Asp120 is a binding site for Mg(2+). The active site involves Lys171. Asp227 provides a ligand contact to GDP-alpha-D-mannose. Asp227 is a Mg(2+) binding site. The interval Tyr254 to Met369 is hexapeptide repeat domain.

This sequence belongs to the transferase hexapeptide repeat family. Component of the GMPPA-GMPPB mannose-1-phosphate guanylyltransferase complex composed of 4 Gmppa subunits and 8 Gmppb subunits; the complex is organized into three layers, a central layer made up of 2 Gmppa dimers sandwiched between two layers each made up of 2 Gmppb dimers. Gmppb catalytic activity is reduced when part of the complex and binding of GDP-alpha-D-Mannose by Gmppa induces allosteric feedback inhibition of Gmppb. The cofactor is Mg(2+).

It catalyses the reaction alpha-D-mannose 1-phosphate + GTP + H(+) = GDP-alpha-D-mannose + diphosphate. Its pathway is nucleotide-sugar biosynthesis; GDP-alpha-D-mannose biosynthesis; GDP-alpha-D-mannose from alpha-D-mannose 1-phosphate (GTP route): step 1/1. With respect to regulation, enzyme activity is reduced by incorporation into the GMPPA-GMPPB mannose-1-phosphate guanylyltransferase complex. Allosterically inhibited, when part of the GMPPA-GMPPB complex, by GDP-alpha-D-mannose binding to Gmppa. Functionally, catalytic subunit of the GMPPA-GMPPB mannose-1-phosphate guanylyltransferase complex. Catalyzes the formation of GDP-mannose, an essential precursor of glycan moieties of glycoproteins and glycolipids. Can catalyze the reverse reaction in vitro. Together with GMPPA regulates GDP-alpha-D-mannose levels. This is Mannose-1-phosphate guanylyltransferase catalytic subunit beta from Drosophila melanogaster (Fruit fly).